The sequence spans 146 residues: Large ribosomal subunit protein uL15 (146 aa).

Over residues methionine 1–arginine 13 the composition is skewed to basic and acidic residues. Residues methionine 1–tyrosine 58 form a disordered region. 2 stretches are compositionally biased toward gly residues: residues arginine 21–alanine 31 and serine 42–glycine 52.

It belongs to the universal ribosomal protein uL15 family. In terms of assembly, part of the 50S ribosomal subunit.

Its function is as follows. Binds to the 23S rRNA. In Shouchella clausii (strain KSM-K16) (Alkalihalobacillus clausii), this protein is Large ribosomal subunit protein uL15.